The chain runs to 473 residues: Hexaprenyl pyrophosphate synthase, mitochondrial (473 aa).

Isopentenyl diphosphate is bound by residues lysine 84, arginine 87, and histidine 186. Residues aspartate 193 and aspartate 197 each contribute to the Mg(2+) site. An an all-trans-polyprenyl diphosphate-binding site is contributed by arginine 202. Arginine 203 contacts isopentenyl diphosphate. 4 residues coordinate an all-trans-polyprenyl diphosphate: lysine 323, threonine 324, glutamine 361, and lysine 378.

The protein belongs to the FPP/GGPP synthase family. Requires Mg(2+) as cofactor.

It is found in the mitochondrion inner membrane. It participates in cofactor biosynthesis; ubiquinone biosynthesis. Functionally, assembly of polyisoprenoid side chains. The polyprenyl synthase of coenzyme Q biosynthesis catalyzes the formation from isopentenyl diphosphate of all trans-polyprenyl pyrophosphates generally ranging in length of between 6 and 10 isoprene units depending on the species. This Saccharomyces cerevisiae (strain ATCC 204508 / S288c) (Baker's yeast) protein is Hexaprenyl pyrophosphate synthase, mitochondrial (COQ1).